A 332-amino-acid polypeptide reads, in one-letter code: MNKIDFVVTWVDGNDPVWKEKKSRYDGSVSTSKQSMNSVKAYREWGTFKYWFRGVERFAPWVNKVYLVTDQQRPSWLDINSEKLVLVDHTEIICNDCLPVFSANPIESNIHRIPGLSEHFVFFNDDMYLTAPVEPTDFFSEDGLPKYNTALSPIIPERYGTGNFQINDMEIVTSYFSRNEILKNGQFFDPKQGLKSIVKSLLYRNSQFICGFWESHLPYPLLKSTMDLIWEKEKAVLGRTSASRFRNPSDTNVWLFKYWQIASGQYAVGNPKLGRLFSLDNAGPDFWNLLNSGKYKIMCINDVYDIKDEEKVMQEFIAAMKNLLPDKSTFEL.

It belongs to the stealth family.

The polypeptide is Capsular polysaccharide phosphotransferase WcwK (wcwK) (Streptococcus pneumoniae).